Reading from the N-terminus, the 588-residue chain is MSKRTTYCGLVTEDLLGQRVTLKGWVHNRRDLGGLIFVDLRDREGYVQIVFNPDFSKEALEIAESIRSEYVIEVEGTVTKRDPETVNPKIKTGNVEVQVDHINIINKAQTPPFSINDENQQVDENIRLKYRYLDLRRQELAQTIKMRHQITRSVREFLDRDGFFDIETPVLTKSTPEGARDYLVPSRVHEGQFYALPQSPQLFKQLLMISGFDKYYQIVKCFRDEDLRADRQPEFTQVDVEMSFVDQEDVMEMGEALLKKVVKDVKGIDLTEQFPRMTYAEAMSRYGSDKPDTRFEMELKDVSELGRTMDFKVFKDTVEKGGEVKALAAKGAADKYTRKDMDALTEFVNIYGAKGLAWVKVVEDGFSGPIARFFEDKDVEKVKELTGAETGDLVMFVADKPSVVAQSLGALRVKLAHELGLIDNNKLNFLWVTDWPLLEYDEDEKRYVAAHHPFTSPKDEDLDKLDSAPEKAQAKAYDIVLNGYELGGGSIRIHNADIQSKMFEVLGFTKEQAQEQFGFLLDAFKYGAPPHGGIALGLDRFVMLLAGRNNLRDTIAFPKTASAVSLMTQAPSEVSDKQLEELSLRIRH.

E177 is an L-aspartate binding site. Residues 201–204 form an aspartate region; it reads QLFK. L-aspartate is bound at residue R223. ATP is bound by residues 223–225 and Q232; that span reads RDE. H451 contacts L-aspartate. E485 lines the ATP pocket. R492 is an L-aspartate binding site. ATP is bound at residue 537–540; that stretch reads GLDR.

The protein belongs to the class-II aminoacyl-tRNA synthetase family. Type 1 subfamily. In terms of assembly, homodimer.

It localises to the cytoplasm. It carries out the reaction tRNA(Asp) + L-aspartate + ATP = L-aspartyl-tRNA(Asp) + AMP + diphosphate. Catalyzes the attachment of L-aspartate to tRNA(Asp) in a two-step reaction: L-aspartate is first activated by ATP to form Asp-AMP and then transferred to the acceptor end of tRNA(Asp). This is Aspartate--tRNA ligase from Staphylococcus carnosus (strain TM300).